The following is a 1235-amino-acid chain: ATP-dependent helicase/nuclease subunit A (1235 aa).

In terms of domain architecture, UvrD-like helicase ATP-binding spans 12–482 (SLWTDDQWKA…IDLSQNFRSR (471 aa)). Residue 33 to 40 (AAAGSGKT) participates in ATP binding. The region spanning 509–800 (AAELTLGASF…RMMTIHASKG (292 aa)) is the UvrD-like helicase C-terminal domain.

The protein belongs to the helicase family. AddA subfamily. As to quaternary structure, heterodimer of AddA and AddB/RexB. It depends on Mg(2+) as a cofactor.

The enzyme catalyses Couples ATP hydrolysis with the unwinding of duplex DNA by translocating in the 3'-5' direction.. It catalyses the reaction ATP + H2O = ADP + phosphate + H(+). The heterodimer acts as both an ATP-dependent DNA helicase and an ATP-dependent, dual-direction single-stranded exonuclease. Recognizes the chi site generating a DNA molecule suitable for the initiation of homologous recombination. The AddA nuclease domain is required for chi fragment generation; this subunit has the helicase and 3' -&gt; 5' nuclease activities. The polypeptide is ATP-dependent helicase/nuclease subunit A (Listeria monocytogenes serotype 4b (strain F2365)).